Reading from the N-terminus, the 192-residue chain is Probable nicotinate-nucleotide adenylyltransferase (192 aa).

It belongs to the NadD family.

The enzyme catalyses nicotinate beta-D-ribonucleotide + ATP + H(+) = deamido-NAD(+) + diphosphate. Its pathway is cofactor biosynthesis; NAD(+) biosynthesis; deamido-NAD(+) from nicotinate D-ribonucleotide: step 1/1. Functionally, catalyzes the reversible adenylation of nicotinate mononucleotide (NaMN) to nicotinic acid adenine dinucleotide (NaAD). The sequence is that of Probable nicotinate-nucleotide adenylyltransferase from Shouchella clausii (strain KSM-K16) (Alkalihalobacillus clausii).